The primary structure comprises 446 residues: Methionine aminopeptidase 2-1 (446 aa).

A disordered region spans residues 1–88 (MAAQVTPELA…PPRVILSSIF (88 aa)). Residues 32–44 (ENEDVESDDDNEG) are compositionally biased toward acidic residues. Residues 57–72 (AKKKKKKKPKKKKKGG) show a composition bias toward basic residues. Residue His-196 participates in substrate binding. Residues Asp-216, Asp-227, and His-296 each contribute to the a divalent metal cation site. His-304 is a substrate binding site. The a divalent metal cation site is built by Glu-332 and Glu-427.

It belongs to the peptidase M24A family. Methionine aminopeptidase eukaryotic type 2 subfamily. Requires Co(2+) as cofactor. Zn(2+) is required as a cofactor. Mn(2+) serves as cofactor. The cofactor is Fe(2+).

The protein localises to the cytoplasm. The catalysed reaction is Release of N-terminal amino acids, preferentially methionine, from peptides and arylamides.. Functionally, cotranslationally removes the N-terminal methionine from nascent proteins. The N-terminal methionine is often cleaved when the second residue in the primary sequence is small and uncharged (Met-Ala-, Cys, Gly, Pro, Ser, Thr, or Val). The sequence is that of Methionine aminopeptidase 2-1 from Blastomyces gilchristii (strain SLH14081) (Blastomyces dermatitidis).